Reading from the N-terminus, the 90-residue chain is Small ribosomal subunit protein bS16 (90 aa).

This sequence belongs to the bacterial ribosomal protein bS16 family.

The sequence is that of Small ribosomal subunit protein bS16 from Streptococcus equi subsp. zooepidemicus (strain H70).